A 297-amino-acid chain; its full sequence is MRLELLVVLLVGLAALAPSGSTCCKTEPPRCETEPPRCETEPPRCETEPPRCETEPPRCETTTPKCETTPPTCRTEPPTCKTEPPTCRTEPPTCKTKPPTCRTEPPTCRTEPPTCKTKPPTCKTEPPTCKTEPPTCRTEPPTCKTEPPTCRTEPPTCKTEPPTCKTEPPTCKTEPPCEKHCTKRIKRHRTKRTKRSKSTKKIVHHHNRPGTTPESGCGCGSKNESGGGGSGCILKDLLTPKCPDSKPKPQASPKCKSDPKPKAASKTTSKPKPKACDSGKKNTTKKPRKTQPQKGGC.

Residues 1–21 (MRLELLVVLLVGLAALAPSGS) form the signal peptide. Repeat copies occupy residues 26 to 32 (TEPPRCE), 33 to 39 (TEPPRCE), 40 to 46 (TEPPRCE), 47 to 53 (TEPPRCE), 54 to 60 (TEPPRCE), 61 to 67 (TTTPKCE), 68 to 74 (TTPPTCR), 75 to 81 (TEPPTCK), 82 to 88 (TEPPTCR), 89 to 95 (TEPPTCK), 96 to 102 (TKPPTCR), 103 to 109 (TEPPTCR), 110 to 116 (TEPPTCK), 117 to 123 (TKPPTCK), 124 to 130 (TEPPTCK), 131 to 137 (TEPPTCR), 138 to 144 (TEPPTCK), 145 to 151 (TEPPTCR), 152 to 158 (TEPPTCK), 159 to 165 (TEPPTCK), and 166 to 172 (TEPPTCK). The interval 26–84 (TEPPRCETEPPRCETEPPRCETEPPRCETEPPRCETTTPKCETTPPTCRTEPPTCKTEP) is disordered. Residues 26–179 (TEPPRCETEP…TCKTEPPCEK (154 aa)) form a 22 X 7 AA approximate tandem repeats of T-[ETK]-[PT]-P-[RKT]-C-[ERK] region. Positions 27-58 (EPPRCETEPPRCETEPPRCETEPPRCETEPPR) are enriched in basic and acidic residues. The span at 59 to 84 (CETTTPKCETTPPTCRTEPPTCKTEP) shows a compositional bias: low complexity. Positions 141–174 (PTCKTEPPTCRTEPPTCKTEPPTCKTEPPTCKTE) are enriched in low complexity. Disordered regions lie at residues 141–218 (PTCK…SGCG) and 243–297 (PDSK…KGGC). A 22; approximate repeat occupies 173-179 (TEPPCEK). 2 stretches are compositionally biased toward basic residues: residues 181 to 208 (CTKRIKRHRTKRTKRSKSTKKIVHHHNR) and 282 to 291 (NTTKKPRKTQ).

In terms of tissue distribution, salivary gland.

The protein localises to the secreted. This is Salivary glue protein Sgs-4 (Sgs4) from Drosophila melanogaster (Fruit fly).